The sequence spans 299 residues: 5-azacytidine resistance protein azr1 (299 aa).

Positions Lys35–Ile293 constitute a PPM-type phosphatase domain.

In terms of biological role, confers azacytidine resistance in high copy. The polypeptide is 5-azacytidine resistance protein azr1 (azr1) (Schizosaccharomyces pombe (strain 972 / ATCC 24843) (Fission yeast)).